The following is a 274-amino-acid chain: Centriolar and ciliogenesis-associated protein hyls-1 (274 aa).

2 disordered regions span residues 156–188 and 255–274; these read RSSVDDEENIAESVSVGLSTETEQSELQKSSRP and NNEDWKANHDKDWSPRPYID. Positions 171 to 183 are enriched in polar residues; sequence VGLSTETEQSELQ. The segment covering 257-274 has biased composition (basic and acidic residues); it reads EDWKANHDKDWSPRPYID.

The protein belongs to the HYLS1 family. As to quaternary structure, interacts with sas-4; leading to its localization into newly forming centrioles.

Its subcellular location is the cytoplasm. The protein resides in the cytoskeleton. The protein localises to the microtubule organizing center. It localises to the centrosome. It is found in the centriole. Its subcellular location is the cell projection. The protein resides in the cilium. Plays an important role in ciliogenesis. This Caenorhabditis elegans protein is Centriolar and ciliogenesis-associated protein hyls-1.